We begin with the raw amino-acid sequence, 565 residues long: FAD-linked oxidoreductase ZEB1 (565 aa).

The signal sequence occupies residues 1 to 27 (MKLSPSKYLPVLLGTLSLTIANPSADC). N-linked (GlcNAc...) asparagine glycans are attached at residues Asn46, Asn82, and Asn100. In terms of domain architecture, FAD-binding PCMH-type spans 115–293 (LGNYVSYAIA…ISMTVKAHPG (179 aa)). Asn340, Asn352, and Asn421 each carry an N-linked (GlcNAc...) asparagine glycan.

This sequence belongs to the oxygen-dependent FAD-linked oxidoreductase family.

The protein operates within mycotoxin biosynthesis. Functionally, FAD-linked oxidoreductase; part of the gene cluster that mediates the biosynthesis of zearalenone (ZEA), a nonsteroid estrogen that is a contaminant of cereal grains and causes estrogenic disorders in humans and animals. The ZEA backbone is synthesized from a single acetyl-CoA molecule and eight malonyl-CoA molecules. The reducing polyketide synthase ZEA2 is proposed to synthesize a reduced hexaketide intermediate by using different combinations of its reductive domains during each round of condensation. The hexaketide thioester is then transacylated to the non-reducing polyketide synthase ZEA1 and is further condensed with three malonyl-CoAs without reductive tailoring to yield a mixed reduced/unreduced nonaketide. ZEA1 must be able to interact with ZEA2 to facilitate starter-unit acyltransfer and initiate polyketide biosynthesis. ZEA1 also mediates the required C2-C7 cyclization to form the resorcylate core and catalyzes the formation of the macrolactone. ZEB1 is then responsible for the chemical conversion of beta-zearalenonol (beta-ZOL) to ZEA in the biosynthetic pathway. The chain is FAD-linked oxidoreductase ZEB1 from Gibberella zeae (strain ATCC MYA-4620 / CBS 123657 / FGSC 9075 / NRRL 31084 / PH-1) (Wheat head blight fungus).